Consider the following 363-residue polypeptide: Fructose-1,6-bisphosphatase 1 (363 aa).

Val2 is subject to N-acetylvaline. AMP contacts are provided by residues 18-22 (VLEEG) and 28-32 (TGEMT). Positions 69 and 98 each coordinate Mg(2+). Residue 113–114 (KY) participates in AMP binding. Mg(2+) is bound by residues Asp119, Leu121, and Asp122. 122 to 125 (DGSS) provides a ligand contact to substrate. Arg141 contacts AMP. Lys151 bears the N6-succinyllysine mark. Substrate-binding positions include 213 to 216 (NEGY), 244 to 249 (RYVGSM), Tyr265, and 275 to 277 (KLR). Phosphotyrosine is present on residues Tyr216, Tyr245, and Tyr265. Glu281 is a binding site for Mg(2+). Residues Ser339 and Ser353 each carry the phosphoserine modification.

The protein belongs to the FBPase class 1 family. As to quaternary structure, homotetramer. The cofactor is Mg(2+).

It catalyses the reaction beta-D-fructose 1,6-bisphosphate + H2O = beta-D-fructose 6-phosphate + phosphate. It functions in the pathway carbohydrate biosynthesis; gluconeogenesis. Its activity is regulated as follows. Subject to complex allosteric regulation. The enzyme can assume an active R-state, or an inactive T-state. Intermediate conformations may exist. AMP acts as an allosteric inhibitor. AMP binding affects the turnover of bound substrate and not the affinity for substrate. Fructose 2,6-bisphosphate acts as a competitive inhibitor. Fructose 2,6-bisphosphate and AMP have synergistic effects. In terms of biological role, catalyzes the hydrolysis of fructose 1,6-bisphosphate to fructose 6-phosphate in the presence of divalent cations, acting as a rate-limiting enzyme in gluconeogenesis. Plays a role in regulating glucose sensing and insulin secretion of pancreatic beta-cells. Appears to modulate glycerol gluconeogenesis in liver. Important regulator of appetite and adiposity; increased expression of the protein in liver after nutrient excess increases circulating satiety hormones and reduces appetite-stimulating neuropeptides and thus seems to provide a feedback mechanism to limit weight gain. This Rattus norvegicus (Rat) protein is Fructose-1,6-bisphosphatase 1 (Fbp1).